The chain runs to 864 residues: Carbohydrate-responsive element-binding protein (864 aa).

2 disordered regions span residues 15–41 (PRVV…AGGL) and 53–77 (MVSS…LADF). 3 positions are modified to phosphoserine: S20, S23, and S25. The residue at position 27 (T27) is a Phosphothreonine. A Phosphoserine modification is found at S196. 5 disordered regions span residues 332 to 397 (SSGI…APGP), 449 to 468 (PGVS…QPGP), 489 to 533 (PHFT…TARD), 547 to 570 (PEQA…PQDT), and 583 to 602 (PIPA…LAPP). A compositionally biased stretch (polar residues) spans 351 to 368 (GMTPHSGNTRLQARNSCS). Positions 513 to 531 (ASPPTLASATASPTATATA) are enriched in low complexity. Phosphoserine; by AMPK is present on S566. The span at 583 to 596 (PIPAPTPPRPPPGP) shows a compositional bias: pro residues. Residues S614, S626, and S643 each carry the phosphoserine modification. The region spanning 661–715 (NRRITHISAEQKRRFNIKLGFDTLHGLVSTLSAQPSLKVSKATTLQKTAEYILML) is the bHLH domain. Residues 715–736 (LQQERAAMQEEAQQLRDEIEEL) are leucine-zipper.

In terms of assembly, binds DNA as a heterodimer with TCFL4/MLX. In terms of processing, phosphorylation at Ser-566 by AMPK inactivates the DNA-binding activity. Expressed in the ventricular and intermediate zones of the developing spinal cord of 12.5 dpc embryos. In later embryos expressed in a variety of tissues.

Its subcellular location is the nucleus. Transcriptional repressor. Binds to the canonical and non-canonical E box sequences 5'-CACGTG-3'. This chain is Carbohydrate-responsive element-binding protein (Mlxipl), found in Mus musculus (Mouse).